We begin with the raw amino-acid sequence, 161 residues long: Regulator of ribonuclease activity A (161 aa).

The protein belongs to the RraA family. As to quaternary structure, homotrimer. Binds to both RNA-binding sites in the C-terminal region of Rne and to RhlB.

It localises to the cytoplasm. Its function is as follows. Globally modulates RNA abundance by binding to RNase E (Rne) and regulating its endonucleolytic activity. Can modulate Rne action in a substrate-dependent manner by altering the composition of the degradosome. Modulates RNA-binding and helicase activities of the degradosome. This is Regulator of ribonuclease activity A from Erwinia tasmaniensis (strain DSM 17950 / CFBP 7177 / CIP 109463 / NCPPB 4357 / Et1/99).